A 322-amino-acid polypeptide reads, in one-letter code: CRISPR-associated endonuclease Cas1 (322 aa).

Positions 149, 214, and 229 each coordinate Mn(2+).

The protein belongs to the CRISPR-associated endonuclease Cas1 family. In terms of assembly, homodimer, forms a heterotetramer with a Cas2 homodimer. Mg(2+) serves as cofactor. It depends on Mn(2+) as a cofactor.

In terms of biological role, CRISPR (clustered regularly interspaced short palindromic repeat), is an adaptive immune system that provides protection against mobile genetic elements (viruses, transposable elements and conjugative plasmids). CRISPR clusters contain spacers, sequences complementary to antecedent mobile elements, and target invading nucleic acids. CRISPR clusters are transcribed and processed into CRISPR RNA (crRNA). Acts as a dsDNA endonuclease. Involved in the integration of spacer DNA into the CRISPR cassette. This chain is CRISPR-associated endonuclease Cas1, found in Pyrococcus horikoshii (strain ATCC 700860 / DSM 12428 / JCM 9974 / NBRC 100139 / OT-3).